A 105-amino-acid polypeptide reads, in one-letter code: MIGNERHGLVGVIGADLIRNAKIPLILLVAVLISAVLVVTTAHRTRLLTAEREQLVLERDALDIEWRNLILEENALGDHSRVESIAIEKLKMQHVDPSQENIVIK.

Residues 1–22 (MIGNERHGLVGVIGADLIRNAK) lie on the Cytoplasmic side of the membrane. Residues 23-43 (IPLILLVAVLISAVLVVTTAH) traverse the membrane as a helical segment. Topologically, residues 44–105 (RTRLLTAERE…DPSQENIVIK (62 aa)) are periplasmic.

This sequence belongs to the FtsL family. In terms of assembly, part of a complex composed of FtsB, FtsL and FtsQ.

Its subcellular location is the cell inner membrane. Its function is as follows. Essential cell division protein. May link together the upstream cell division proteins, which are predominantly cytoplasmic, with the downstream cell division proteins, which are predominantly periplasmic. The protein is Cell division protein FtsL of Yersinia pestis.